Here is a 448-residue protein sequence, read N- to C-terminus: Probable glycine dehydrogenase (decarboxylating) subunit 1 (448 aa).

This sequence belongs to the GcvP family. N-terminal subunit subfamily. In terms of assembly, the glycine cleavage system is composed of four proteins: P, T, L and H. In this organism, the P 'protein' is a heterodimer of two subunits.

It catalyses the reaction N(6)-[(R)-lipoyl]-L-lysyl-[glycine-cleavage complex H protein] + glycine + H(+) = N(6)-[(R)-S(8)-aminomethyldihydrolipoyl]-L-lysyl-[glycine-cleavage complex H protein] + CO2. The glycine cleavage system catalyzes the degradation of glycine. The P protein binds the alpha-amino group of glycine through its pyridoxal phosphate cofactor; CO(2) is released and the remaining methylamine moiety is then transferred to the lipoamide cofactor of the H protein. This chain is Probable glycine dehydrogenase (decarboxylating) subunit 1, found in Listeria monocytogenes serotype 4a (strain HCC23).